The following is a 182-amino-acid chain: Functional amyloid subunit FapB (182 aa).

Residues 1 to 18 (MTHSWLLLTVLGCSAAMA) form the signal peptide. The FapB_R1 repeat unit spans residues 22–58 (NQALIDNAGKQYTGVLSVNQAAGNQHQQINSRAISLG). One copy of the FapB_R2 repeat lies at 80–114 (SAAIQGSAFSNGNGILGVNQSAGANNQMINAVRIS). Residues 150–180 (SDQAFTGSRGVVQVNQSAGVGNRMANTLGVT) form a FapB_R3 repeat.

This sequence belongs to the FapB/FapC family. In terms of assembly, forms fibrils in vitro; in the presence of FapA the fibrils are slightly narrower. A minor component of purified amyloid fibrils. Fibrils are resistant to boiling in 2% (weight/vol) SDS and require &gt;90% (vol/vol) formic acid to dissolve.

It is found in the fimbrium. The protein localises to the secreted. In terms of biological role, a minor component of the functional amyloid in this bacterium. Probably nucleates fibril formation; FapB nucleates fibrillation its own, FapA inhibits FapB fibril elongation. Upon overexpression of the endogenous six-gene locus (fapA-fapF) in situ, cells form large clumps during liquid growth, make large amounts of biofilm and produce amyloid fibrils. Expression of the 6 gene operon in E.coli strain BL21(DE3) induces flocculation and biofilm formation with copious extracellular fibrils. The protein is Functional amyloid subunit FapB of Pseudomonas fluorescens.